A 687-amino-acid polypeptide reads, in one-letter code: Glycine--tRNA ligase beta subunit (687 aa).

This sequence belongs to the class-II aminoacyl-tRNA synthetase family. In terms of assembly, tetramer of two alpha and two beta subunits.

It is found in the cytoplasm. It carries out the reaction tRNA(Gly) + glycine + ATP = glycyl-tRNA(Gly) + AMP + diphosphate. This Trichlorobacter lovleyi (strain ATCC BAA-1151 / DSM 17278 / SZ) (Geobacter lovleyi) protein is Glycine--tRNA ligase beta subunit.